Here is a 74-residue protein sequence, read N- to C-terminus: ATP synthase subunit c (74 aa).

A run of 2 helical transmembrane segments spans residues Ile9 to Phe29 and Leu51 to Leu71.

The protein belongs to the ATPase C chain family. F-type ATPases have 2 components, F(1) - the catalytic core - and F(0) - the membrane proton channel. F(1) has five subunits: alpha(3), beta(3), gamma(1), delta(1), epsilon(1). F(0) has three main subunits: a(1), b(2) and c(10-14). The alpha and beta chains form an alternating ring which encloses part of the gamma chain. F(1) is attached to F(0) by a central stalk formed by the gamma and epsilon chains, while a peripheral stalk is formed by the delta and b chains.

It is found in the cell inner membrane. In terms of biological role, f(1)F(0) ATP synthase produces ATP from ADP in the presence of a proton or sodium gradient. F-type ATPases consist of two structural domains, F(1) containing the extramembraneous catalytic core and F(0) containing the membrane proton channel, linked together by a central stalk and a peripheral stalk. During catalysis, ATP synthesis in the catalytic domain of F(1) is coupled via a rotary mechanism of the central stalk subunits to proton translocation. Functionally, key component of the F(0) channel; it plays a direct role in translocation across the membrane. A homomeric c-ring of between 10-14 subunits forms the central stalk rotor element with the F(1) delta and epsilon subunits. The chain is ATP synthase subunit c from Orientia tsutsugamushi (strain Ikeda) (Rickettsia tsutsugamushi).